Consider the following 206-residue polypeptide: Uracil phosphoribosyltransferase (206 aa).

Residues R76, R101, and 128-136 (DPMLATGTT) contribute to the 5-phospho-alpha-D-ribose 1-diphosphate site. Uracil-binding positions include I191 and 196 to 198 (GDA). D197 lines the 5-phospho-alpha-D-ribose 1-diphosphate pocket.

This sequence belongs to the UPRTase family. It depends on Mg(2+) as a cofactor.

The catalysed reaction is UMP + diphosphate = 5-phospho-alpha-D-ribose 1-diphosphate + uracil. It participates in pyrimidine metabolism; UMP biosynthesis via salvage pathway; UMP from uracil: step 1/1. Its activity is regulated as follows. Allosterically activated by GTP. In terms of biological role, catalyzes the conversion of uracil and 5-phospho-alpha-D-ribose 1-diphosphate (PRPP) to UMP and diphosphate. The polypeptide is Uracil phosphoribosyltransferase (Mycoplasma genitalium (strain ATCC 33530 / DSM 19775 / NCTC 10195 / G37) (Mycoplasmoides genitalium)).